A 94-amino-acid chain; its full sequence is Cell division protein FtsB (94 aa).

Over 1–3 (MRV) the chain is Cytoplasmic. The helical transmembrane segment at 4–21 (FALTLSLLLVWLLYTLMW) threads the bilayer. Topologically, residues 22–94 (GKNGVMDFRA…YRIIGEESRQ (73 aa)) are periplasmic. Positions 33–76 (QAEIEVQQQVNANLHLRNQEMFAEIDDLRQGLDAIEERARNELG) form a coiled coil.

This sequence belongs to the FtsB family. In terms of assembly, part of a complex composed of FtsB, FtsL and FtsQ.

It localises to the cell inner membrane. Functionally, essential cell division protein. May link together the upstream cell division proteins, which are predominantly cytoplasmic, with the downstream cell division proteins, which are predominantly periplasmic. This Vibrio cholerae serotype O1 (strain ATCC 39315 / El Tor Inaba N16961) protein is Cell division protein FtsB.